The sequence spans 117 residues: uncharacterized protein (117 aa).

The first 23 residues, 1–23 (MVSEAEFMAALAKFAETSATASA), serve as a signal peptide directing secretion.

This is an uncharacterized protein from Archaeoglobus fulgidus (strain ATCC 49558 / DSM 4304 / JCM 9628 / NBRC 100126 / VC-16).